A 231-amino-acid chain; its full sequence is MRLVIADCSVRYEGRLNAHLPLARRLIMLKADGSVLIHSDGGSYKPLNWMSPPATLRVREPSEELLADGVKEVWEVQAGKSDDRLVIHIMTVHSRLEHELGADPGLIKDGVEADLQRLLAEQITLLGEGFSLVRREYPTTIGPVDILARDANGATVAVELKRRGDIDGVEQLTRYLELLNRDPLLRPVRGVFAAQQIKPQARTLARDRGIECLSLDYDEMRGNVDTQSRLF.

The protein belongs to the NucS endonuclease family.

Its subcellular location is the cytoplasm. Cleaves both 3' and 5' ssDNA extremities of branched DNA structures. This is Endonuclease NucS from Kocuria rhizophila (strain ATCC 9341 / DSM 348 / NBRC 103217 / DC2201).